The primary structure comprises 367 residues: 4-hydroxy-3-methylbut-2-en-1-yl diphosphate synthase (flavodoxin) (367 aa).

[4Fe-4S] cluster-binding residues include Cys-265, Cys-268, Cys-300, and Glu-307.

The protein belongs to the IspG family. The cofactor is [4Fe-4S] cluster.

The enzyme catalyses (2E)-4-hydroxy-3-methylbut-2-enyl diphosphate + oxidized [flavodoxin] + H2O + 2 H(+) = 2-C-methyl-D-erythritol 2,4-cyclic diphosphate + reduced [flavodoxin]. The protein operates within isoprenoid biosynthesis; isopentenyl diphosphate biosynthesis via DXP pathway; isopentenyl diphosphate from 1-deoxy-D-xylulose 5-phosphate: step 5/6. Its function is as follows. Converts 2C-methyl-D-erythritol 2,4-cyclodiphosphate (ME-2,4cPP) into 1-hydroxy-2-methyl-2-(E)-butenyl 4-diphosphate. This chain is 4-hydroxy-3-methylbut-2-en-1-yl diphosphate synthase (flavodoxin), found in Bacillus cereus (strain ATCC 10987 / NRS 248).